The following is a 336-amino-acid chain: Phosphate acyltransferase (336 aa).

This sequence belongs to the PlsX family. As to quaternary structure, homodimer. Probably interacts with PlsY.

The protein resides in the cytoplasm. The enzyme catalyses a fatty acyl-[ACP] + phosphate = an acyl phosphate + holo-[ACP]. Its pathway is lipid metabolism; phospholipid metabolism. Functionally, catalyzes the reversible formation of acyl-phosphate (acyl-PO(4)) from acyl-[acyl-carrier-protein] (acyl-ACP). This enzyme utilizes acyl-ACP as fatty acyl donor, but not acyl-CoA. This Pseudomonas putida (strain GB-1) protein is Phosphate acyltransferase.